A 210-amino-acid chain; its full sequence is Small ribosomal subunit protein uS3 (210 aa).

The KH type-2 domain maps to 38–106 (LRSFLKKRLY…EVYLNIQEVR (69 aa)).

It belongs to the universal ribosomal protein uS3 family. As to quaternary structure, part of the 30S ribosomal subunit. Forms a tight complex with proteins S10 and S14.

Functionally, binds the lower part of the 30S subunit head. Binds mRNA in the 70S ribosome, positioning it for translation. The chain is Small ribosomal subunit protein uS3 from Geotalea uraniireducens (strain Rf4) (Geobacter uraniireducens).